The sequence spans 395 residues: Beta-1,4-galactosyltransferase 3 (395 aa).

Over 1 to 10 (MLRRLLERPC) the chain is Cytoplasmic. The chain crosses the membrane as a helical; Signal-anchor for type II membrane protein span at residues 11–31 (TLALLVGSQLAVMMYLSLGGF). Topologically, residues 32–395 (RSLSALFGRD…ANHTAPHGSH (364 aa)) are lumenal. N-linked (GlcNAc...) asparagine glycosylation occurs at N57. A disulfide bridge connects residues C79 and C121. 132 to 136 (PHRAR) serves as a coordination point for UDP-alpha-D-galactose. N-linked (GlcNAc...) asparagine glycosylation is present at N168. UDP-alpha-D-galactose is bound by residues 171–173 (FNR), 198–199 (VD), Y228, and W260. C192 and C211 are oxidised to a cystine. D199 is a binding site for Mn(2+). 262–265 (GEDD) serves as a coordination point for N-acetyl-D-glucosamine. H293 serves as a coordination point for Mn(2+). Residue 293–295 (HRG) participates in UDP-alpha-D-galactose binding. R305 contributes to the N-acetyl-D-glucosamine binding site. N-linked (GlcNAc...) asparagine glycans are attached at residues N339 and N387. The interval 341 to 395 (TADIGTDPRGPRAPSGPRYPPGSSQAFRQEMLQRRPPARPGPLPTANHTAPHGSH) is disordered.

Belongs to the glycosyltransferase 7 family. Requires Mn(2+) as cofactor.

It localises to the golgi apparatus. Its subcellular location is the golgi stack membrane. It carries out the reaction an N-acetyl-beta-D-glucosaminyl derivative + UDP-alpha-D-galactose = a beta-D-galactosyl-(1-&gt;4)-N-acetyl-beta-D-glucosaminyl derivative + UDP + H(+). It catalyses the reaction N-acetyl-D-glucosamine + UDP-alpha-D-galactose = beta-D-galactosyl-(1-&gt;4)-N-acetyl-D-glucosamine + UDP + H(+). The enzyme catalyses a beta-D-GlcNAc-(1-&gt;3)-beta-D-Gal-(1-&gt;4)-beta-D-Glc-(1&lt;-&gt;1)-Cer(d18:1(4E)) + UDP-alpha-D-galactose = a neolactoside nLc4Cer(d18:1(4E)) + UDP + H(+). The catalysed reaction is a beta-D-glucosylceramide + UDP-alpha-D-galactose = a beta-D-galactosyl-(1-&gt;4)-beta-D-glucosyl-(1&lt;-&gt;1)-ceramide + UDP + H(+). It carries out the reaction a neolactoside IV(3)-beta-GlcNAc-nLc4Cer + UDP-alpha-D-galactose = a neolactoside nLc6Cer + UDP + H(+). The protein operates within protein modification; protein glycosylation. Functionally, responsible for the synthesis of complex-type N-linked oligosaccharides in many glycoproteins as well as the carbohydrate moieties of glycolipids. The chain is Beta-1,4-galactosyltransferase 3 from Rattus norvegicus (Rat).